The primary structure comprises 2157 residues: Conidial yellow pigment biosynthesis polyketide synthase (2157 aa).

Residues 8-244 (YLFGDQTGDF…VMVPIHGPFH (237 aa)) form an N-terminal acylcarrier protein transacylase domain (SAT) region. Residues 376–807 (LSKIAIIGMS…GGNTALLLED (432 aa)) enclose the Ketosynthase family 3 (KS3) domain. Catalysis depends on for beta-ketoacyl synthase activity residues Cys-548, His-683, and His-725. Positions 912 to 1232 (FLFTGQGAQY…LSSLYLAGVD (321 aa)) are malonyl-CoA:ACP transacylase (MAT) domain. The active-site For acyl/malonyl transferase activity is the Ser-1001. The segment at 1290–1603 (TTSAQRVVES…RKILDIALPP (314 aa)) is product template (PT) domain. An N-terminal hotdog fold region spans residues 1294-1425 (QRVVESRDDG…CEVKLFDCMA (132 aa)). One can recognise a PKS/mFAS DH domain in the interval 1294-1598 (QRVVESRDDG…FQALSRKILD (305 aa)). The Proton acceptor; for dehydratase activity role is filled by His-1326. The tract at residues 1453–1598 (AHRLRRGMVY…FQALSRKILD (146 aa)) is C-terminal hotdog fold. Residue Asp-1511 is the Proton donor; for dehydratase activity of the active site. A disordered region spans residues 1607–1638 (SKAQTSPIQSSAPQKPIETAKPTSRPAPPVTM). Polar residues predominate over residues 1608–1619 (KAQTSPIQSSAP). In terms of domain architecture, Carrier 1 spans 1645 to 1722 (SAGPSVVVRA…DFKRFVTQLS (78 aa)). An O-(pantetheine 4'-phosphoryl)serine modification is found at Ser-1682. Residues 1725–1760 (VASDSSSTDRESEYSFNGDSCSGLSSPASPGTVSPP) are disordered. Residues 1741 to 1759 (NGDSCSGLSSPASPGTVSP) are compositionally biased toward polar residues. Residues 1767–1844 (IHENGTMKEI…QIETALDLKP (78 aa)) form the Carrier 2 domain. Ser-1804 is subject to O-(pantetheine 4'-phosphoryl)serine. The tract at residues 1847-1888 (VPTAVPQSQPITLPQSQSTKQLSTRPTSSSDNHPPATSILLQ) is disordered. Residues 1851–1878 (VPQSQPITLPQSQSTKQLSTRPTSSSDN) are compositionally biased toward polar residues. Residues 1877–2149 (DNHPPATSIL…ELATFMKNAL (273 aa)) form a claisen cyclase domain region. Ser-1967 (for thioesterase activity) is an active-site residue.

The cofactor is pantetheine 4'-phosphate.

The enzyme catalyses 6 malonyl-CoA + acetyl-CoA + 6 H(+) = naphtopyrone YWA1 + 6 CO2 + 7 CoA + H2O. The protein operates within polyketide biosynthesis; heptaketide naphthopyrone YWA1 biosynthesis. Its function is as follows. Non-reducing polyketide synthase that condenses acetate units to form a heptaketide naphthopyrene YWA1, a yellow pigment found in mature asexual spores (conidia), via a polyketomethylene intermediate step. In Emericella nidulans (strain FGSC A4 / ATCC 38163 / CBS 112.46 / NRRL 194 / M139) (Aspergillus nidulans), this protein is Conidial yellow pigment biosynthesis polyketide synthase.